The primary structure comprises 476 residues: Probable cytosolic Fe-S cluster assembly factor GJ13047 (476 aa).

[4Fe-4S] cluster-binding residues include cysteine 23, cysteine 68, cysteine 71, cysteine 74, cysteine 187, cysteine 243, cysteine 395, and cysteine 399.

It belongs to the NARF family.

In terms of biological role, component of the cytosolic iron-sulfur (Fe/S) protein assembly machinery. Required for maturation of extramitochondrial Fe/S proteins. This chain is Probable cytosolic Fe-S cluster assembly factor GJ13047, found in Drosophila virilis (Fruit fly).